The sequence spans 532 residues: CTP synthase (532 aa).

The amidoligase domain stretch occupies residues 1–267 (MAKFIFVTGG…QDIIIEQLQL (267 aa)). Ser13 contributes to the CTP binding site. Ser13 is a binding site for UTP. 14–19 (GLGKGI) contacts ATP. Tyr54 contacts L-glutamine. Residue Asp71 participates in ATP binding. 2 residues coordinate Mg(2+): Asp71 and Glu141. CTP is bound by residues 148–150 (DIE), 188–193 (KTKPIQ), and Lys224. Residues 188–193 (KTKPIQ) and Lys224 each bind UTP. The region spanning 292–532 (EISFVGKYIE…FIKAIVENNK (241 aa)) is the Glutamine amidotransferase type-1 domain. Gly354 is an L-glutamine binding site. The active-site Nucleophile; for glutamine hydrolysis is the Cys381. L-glutamine is bound by residues 382–385 (LGMQ), Glu405, and Arg461. Residues His506 and Glu508 contribute to the active site.

Belongs to the CTP synthase family. In terms of assembly, homotetramer.

It carries out the reaction UTP + L-glutamine + ATP + H2O = CTP + L-glutamate + ADP + phosphate + 2 H(+). The catalysed reaction is L-glutamine + H2O = L-glutamate + NH4(+). It catalyses the reaction UTP + NH4(+) + ATP = CTP + ADP + phosphate + 2 H(+). It functions in the pathway pyrimidine metabolism; CTP biosynthesis via de novo pathway; CTP from UDP: step 2/2. Allosterically activated by GTP, when glutamine is the substrate; GTP has no effect on the reaction when ammonia is the substrate. The allosteric effector GTP functions by stabilizing the protein conformation that binds the tetrahedral intermediate(s) formed during glutamine hydrolysis. Inhibited by the product CTP, via allosteric rather than competitive inhibition. In terms of biological role, catalyzes the ATP-dependent amination of UTP to CTP with either L-glutamine or ammonia as the source of nitrogen. Regulates intracellular CTP levels through interactions with the four ribonucleotide triphosphates. The sequence is that of CTP synthase from Mycoplasma mycoides subsp. mycoides SC (strain CCUG 32753 / NCTC 10114 / PG1).